The following is a 238-amino-acid chain: Orotidine 5'-phosphate decarboxylase (238 aa).

Substrate-binding positions include Asp10, Lys32, 59–68 (DLKLHDIPNT), Thr122, Arg184, Gln193, Gly213, and Arg214. Lys61 functions as the Proton donor in the catalytic mechanism.

It belongs to the OMP decarboxylase family. Type 1 subfamily. In terms of assembly, homodimer.

It catalyses the reaction orotidine 5'-phosphate + H(+) = UMP + CO2. It participates in pyrimidine metabolism; UMP biosynthesis via de novo pathway; UMP from orotate: step 2/2. Its function is as follows. Catalyzes the decarboxylation of orotidine 5'-monophosphate (OMP) to uridine 5'-monophosphate (UMP). The sequence is that of Orotidine 5'-phosphate decarboxylase from Bacillus cereus (strain G9842).